A 205-amino-acid chain; its full sequence is Guanylate kinase (205 aa).

One can recognise a Guanylate kinase-like domain in the interval 3 to 183 (GFVLLISGPS…SYEALRAILI (181 aa)). 10-17 (GPSGAGKS) provides a ligand contact to ATP.

The protein belongs to the guanylate kinase family.

It is found in the cytoplasm. The catalysed reaction is GMP + ATP = GDP + ADP. Functionally, essential for recycling GMP and indirectly, cGMP. In Campylobacter jejuni (strain RM1221), this protein is Guanylate kinase.